The sequence spans 315 residues: Aspartate carbamoyltransferase catalytic subunit (315 aa).

Carbamoyl phosphate is bound by residues R65 and T66. An L-aspartate-binding site is contributed by K93. Residues R115, H145, and Q148 each coordinate carbamoyl phosphate. L-aspartate contacts are provided by R179 and R234. 2 residues coordinate carbamoyl phosphate: G275 and P276.

Belongs to the aspartate/ornithine carbamoyltransferase superfamily. ATCase family. In terms of assembly, heterododecamer (2C3:3R2) of six catalytic PyrB chains organized as two trimers (C3), and six regulatory PyrI chains organized as three dimers (R2).

The catalysed reaction is carbamoyl phosphate + L-aspartate = N-carbamoyl-L-aspartate + phosphate + H(+). It participates in pyrimidine metabolism; UMP biosynthesis via de novo pathway; (S)-dihydroorotate from bicarbonate: step 2/3. In terms of biological role, catalyzes the condensation of carbamoyl phosphate and aspartate to form carbamoyl aspartate and inorganic phosphate, the committed step in the de novo pyrimidine nucleotide biosynthesis pathway. The protein is Aspartate carbamoyltransferase catalytic subunit of Xanthomonas campestris pv. campestris (strain 8004).